Consider the following 2300-residue polypeptide: Protein hobbit (2300 aa).

The signal sequence occupies residues 1–21 (MMLQLLLFCLALFIFVYWVLP). The interval 23–117 (GISWYLVKRF…LRRTQTLAGK (95 aa)) is transmembrane domain. Disordered stretches follow at residues 269-290 (TSTG…RSYD) and 2111-2148 (VSDE…GKKG). The span at 270–282 (STGQPSRRSTQGL) shows a compositional bias: polar residues. The segment at 1750–2300 (VVSETVGAFL…ASSGKRSGND (551 aa)) is required for endoplasmic reticulum-cell membrane contact sites location and binding to phosphatidylinositols. Over residues 2119-2140 (ASTSSASTTNLQAKSSTSSSTK) the composition is skewed to low complexity.

The protein localises to the cell membrane. It is found in the endoplasmic reticulum membrane. The protein resides in the mitochondrion membrane. Its function is as follows. Tube-forming lipid transport protein which binds to phosphatidylinositols and affects phosphatidylinositol-4,5-bisphosphate (PtdIns-4,5-P2) distribution. The chain is Protein hobbit from Drosophila melanogaster (Fruit fly).